The chain runs to 423 residues: Gamma-glutamyl phosphate reductase (423 aa).

Residues 1 to 14 (MTLQAAPRSAAAQQ) are compositionally biased toward low complexity. Residues 1-25 (MTLQAAPRSAAAQQREPDLRQEVHD) form a disordered region. Residues 15-25 (REPDLRQEVHD) show a composition bias toward basic and acidic residues.

This sequence belongs to the gamma-glutamyl phosphate reductase family.

It is found in the cytoplasm. It carries out the reaction L-glutamate 5-semialdehyde + phosphate + NADP(+) = L-glutamyl 5-phosphate + NADPH + H(+). The protein operates within amino-acid biosynthesis; L-proline biosynthesis; L-glutamate 5-semialdehyde from L-glutamate: step 2/2. Functionally, catalyzes the NADPH-dependent reduction of L-glutamate 5-phosphate into L-glutamate 5-semialdehyde and phosphate. The product spontaneously undergoes cyclization to form 1-pyrroline-5-carboxylate. The polypeptide is Gamma-glutamyl phosphate reductase (Mycobacterium ulcerans (strain Agy99)).